The primary structure comprises 261 residues: MWPPAIAETEEVGRIQDLDRQKLPLFSHIETQERVEQKMNLDTLKMEATTETVEVLVKPVGYVWTVFIKMIETWRLRCGARSCRCWCRFPWRISRPATTSPNRFTYTAARGTISLLRSAPELIVALFLVLAYGFGPIAGVLALGLHAAGFLGKFYAEDIENADKKPQEALEAIGAGKLKTLWYGVIPQVLPQYIAYTAYILDRNLRMATVIGLVGAGGIGQELKGRFDMFQYGHVMTILIAIFVFVFVLDQLQARIRAKLI.

Residues 47–253 (EATTETVEVL…VFVFVLDQLQ (207 aa)) form the ABC transmembrane type-1 domain. 3 consecutive transmembrane segments (helical) span residues 122 to 142 (LIVA…GVLA), 203 to 220 (RNLR…GGIG), and 229 to 249 (MFQY…VFVL).

Belongs to the binding-protein-dependent transport system permease family.

It is found in the cell inner membrane. Probably forms part of a binding-protein-dependent hypophosphite transporter. The protein is Putative phosphite transport system permease protein HtxE (htxE) of Stutzerimonas stutzeri (Pseudomonas stutzeri).